The primary structure comprises 296 residues: mRNA export factor rsm1 (296 aa).

The segment at 40-174 adopts a C3HC-type zinc-finger fold; sequence PWSREEFLRR…VSTHLPEEMT (135 aa).

Its subcellular location is the cytoplasm. It localises to the nucleus. In terms of biological role, involved in the export of mRNA from the nucleus to the cytoplasm. This is mRNA export factor rsm1 (rsm1) from Schizosaccharomyces pombe (strain 972 / ATCC 24843) (Fission yeast).